Consider the following 453-residue polypeptide: GTPase Der (453 aa).

2 consecutive EngA-type G domains span residues 3–167 and 187–360; these read PIIV…ISEK and IKVA…EDSK. GTP is bound by residues 9–16, 57–61, 119–122, 193–200, 240–244, and 305–308; these read GRTNVGKS, DTAGL, NKID, GRPNVGKS, DTAGA, and NKCD. The KH-like domain maps to 361–445; that stretch reads RKISTSTLIR…PIQIQFKDNE (85 aa).

Belongs to the TRAFAC class TrmE-Era-EngA-EngB-Septin-like GTPase superfamily. EngA (Der) GTPase family. Associates with the 50S ribosomal subunit.

Its function is as follows. GTPase that plays an essential role in the late steps of ribosome biogenesis. This is GTPase Der from Buchnera aphidicola subsp. Acyrthosiphon pisum (strain Tuc7).